The primary structure comprises 189 residues: MNDEYSQKAKREGYLARSVYKLIEINEKFSLFSYGNVLDIGASPGSFSQYAYKKLKRGILVAVDINDIGLRHVDNFYFVKGDIFSDDTVFKINTLGPYSLVISDAAPRTTGNRLVDTSNSFNLSMRIIDLSLEVLIKKGNLLVKVFQGGDEIQIFKKFEKYFKFVKKIRPKAVRKNSFEIYFLGKSFGK.

G45, F47, D64, D82, and D104 together coordinate S-adenosyl-L-methionine. Residue K144 is the Proton acceptor of the active site.

This sequence belongs to the class I-like SAM-binding methyltransferase superfamily. RNA methyltransferase RlmE family.

It is found in the cytoplasm. The enzyme catalyses uridine(2552) in 23S rRNA + S-adenosyl-L-methionine = 2'-O-methyluridine(2552) in 23S rRNA + S-adenosyl-L-homocysteine + H(+). Its function is as follows. Specifically methylates the uridine in position 2552 of 23S rRNA at the 2'-O position of the ribose in the fully assembled 50S ribosomal subunit. This is Ribosomal RNA large subunit methyltransferase E from Borreliella afzelii (strain PKo) (Borrelia afzelii).